The primary structure comprises 353 residues: Photosystem II protein D1 (353 aa).

N-acetylthreonine is present on Thr2. Thr2 carries the post-translational modification Phosphothreonine. The next 3 membrane-spanning stretches (helical) occupy residues 29-46 (YIGW…TATS), 118-133 (HFLL…EWEL), and 142-156 (WIAV…AATA). His118 is a binding site for chlorophyll a. Tyr126 lines the pheophytin a pocket. Residues Asp170 and Glu189 each coordinate [CaMn4O5] cluster. A helical transmembrane segment spans residues 197 to 218 (FHMLGVAGVFGSSLFSAMHGSL). His198 serves as a coordination point for chlorophyll a. A quinone-binding positions include His215 and 264-265 (SF). Residue His215 coordinates Fe cation. His272 provides a ligand contact to Fe cation. The chain crosses the membrane as a helical span at residues 274–288 (FLAAWPVVGIWFTAL). 4 residues coordinate [CaMn4O5] cluster: His332, Glu333, Asp342, and Ala344. The propeptide occupies 345–353 (AMEAPSVNG).

This sequence belongs to the reaction center PufL/M/PsbA/D family. PSII is composed of 1 copy each of membrane proteins PsbA, PsbB, PsbC, PsbD, PsbE, PsbF, PsbH, PsbI, PsbJ, PsbK, PsbL, PsbM, PsbT, PsbX, PsbY, PsbZ, Psb30/Ycf12, at least 3 peripheral proteins of the oxygen-evolving complex and a large number of cofactors. It forms dimeric complexes. The D1/D2 heterodimer binds P680, chlorophylls that are the primary electron donor of PSII, and subsequent electron acceptors. It shares a non-heme iron and each subunit binds pheophytin, quinone, additional chlorophylls, carotenoids and lipids. D1 provides most of the ligands for the Mn4-Ca-O5 cluster of the oxygen-evolving complex (OEC). There is also a Cl(-1) ion associated with D1 and D2, which is required for oxygen evolution. The PSII complex binds additional chlorophylls, carotenoids and specific lipids. is required as a cofactor. In terms of processing, tyr-161 forms a radical intermediate that is referred to as redox-active TyrZ, YZ or Y-Z. C-terminally processed by CTPA; processing is essential to allow assembly of the oxygen-evolving complex and thus photosynthetic growth.

The protein resides in the plastid. Its subcellular location is the chloroplast thylakoid membrane. The catalysed reaction is 2 a plastoquinone + 4 hnu + 2 H2O = 2 a plastoquinol + O2. Its function is as follows. Photosystem II (PSII) is a light-driven water:plastoquinone oxidoreductase that uses light energy to abstract electrons from H(2)O, generating O(2) and a proton gradient subsequently used for ATP formation. It consists of a core antenna complex that captures photons, and an electron transfer chain that converts photonic excitation into a charge separation. The D1/D2 (PsbA/PsbD) reaction center heterodimer binds P680, the primary electron donor of PSII as well as several subsequent electron acceptors. The polypeptide is Photosystem II protein D1 (Vigna unguiculata (Cowpea)).